The sequence spans 225 residues: Protein-L-isoaspartate O-methyltransferase (225 aa).

Residue S75 is part of the active site.

This sequence belongs to the methyltransferase superfamily. L-isoaspartyl/D-aspartyl protein methyltransferase family.

It localises to the cytoplasm. It catalyses the reaction [protein]-L-isoaspartate + S-adenosyl-L-methionine = [protein]-L-isoaspartate alpha-methyl ester + S-adenosyl-L-homocysteine. Catalyzes the methyl esterification of L-isoaspartyl residues in peptides and proteins that result from spontaneous decomposition of normal L-aspartyl and L-asparaginyl residues. It plays a role in the repair and/or degradation of damaged proteins. This is Protein-L-isoaspartate O-methyltransferase from Xanthomonas axonopodis pv. citri (strain 306).